The following is a 402-amino-acid chain: Phosphoglycerate kinase (402 aa).

Substrate-binding positions include 24–26 (DFN), arginine 40, 63–66 (HFGR), arginine 122, and arginine 155. Residues lysine 206, glycine 297, glutamate 328, and 358–361 (GGDS) each bind ATP.

It belongs to the phosphoglycerate kinase family. Monomer.

The protein localises to the cytoplasm. The enzyme catalyses (2R)-3-phosphoglycerate + ATP = (2R)-3-phospho-glyceroyl phosphate + ADP. It participates in carbohydrate degradation; glycolysis; pyruvate from D-glyceraldehyde 3-phosphate: step 2/5. This Prochlorococcus marinus (strain MIT 9312) protein is Phosphoglycerate kinase.